The primary structure comprises 750 residues: Photosystem I P700 chlorophyll a apoprotein A1 (750 aa).

Helical transmembrane passes span 70–93 (VFSAHFGQLSIIFLWLSGMYFHGA), 156–179 (LYCTAIGALVFAALMLFAGWFHYH), 195–219 (LNHHLAGLLGLGSLSWAGHQVHVSL), 291–309 (IAHHHLAIAILFLVAGHMY), 346–369 (WHAQLSLNLAMLGSLTIVVAHHMY), 385–411 (LSLFTHHMWIGGFLIVGAAAHAAIFMV), 433–455 (AIISHLNWVCIFLGFHSFGLYIH), and 531–549 (FLVHHIHAFTIHVTVLILL). Positions 573 and 582 each coordinate [4Fe-4S] cluster. Transmembrane regions (helical) follow at residues 589-610 (HVFLGLFWMYNAISVVIFHFSW) and 664-686 (LSAYGLFFLGAHFVWAFSLMFLF). His-675 contacts chlorophyll a'. Residues Met-683 and Tyr-691 each contribute to the chlorophyll a site. Trp-692 lines the phylloquinone pocket. The chain crosses the membrane as a helical span at residues 724 to 744 (AVGVTHYLLGGIATTWAFFLA).

It belongs to the PsaA/PsaB family. The PsaA/B heterodimer binds the P700 chlorophyll special pair and subsequent electron acceptors. PSI consists of a core antenna complex that captures photons, and an electron transfer chain that converts photonic excitation into a charge separation. The eukaryotic PSI reaction center is composed of at least 11 subunits. P700 is a chlorophyll a/chlorophyll a' dimer, A0 is one or more chlorophyll a, A1 is one or both phylloquinones and FX is a shared 4Fe-4S iron-sulfur center. serves as cofactor.

The protein resides in the plastid. Its subcellular location is the chloroplast thylakoid membrane. The enzyme catalyses reduced [plastocyanin] + hnu + oxidized [2Fe-2S]-[ferredoxin] = oxidized [plastocyanin] + reduced [2Fe-2S]-[ferredoxin]. Its function is as follows. PsaA and PsaB bind P700, the primary electron donor of photosystem I (PSI), as well as the electron acceptors A0, A1 and FX. PSI is a plastocyanin-ferredoxin oxidoreductase, converting photonic excitation into a charge separation, which transfers an electron from the donor P700 chlorophyll pair to the spectroscopically characterized acceptors A0, A1, FX, FA and FB in turn. Oxidized P700 is reduced on the lumenal side of the thylakoid membrane by plastocyanin. The sequence is that of Photosystem I P700 chlorophyll a apoprotein A1 from Populus trichocarpa (Western balsam poplar).